A 173-amino-acid polypeptide reads, in one-letter code: Shikimate kinase (173 aa).

16 to 21 (GSGKTT) is an ATP binding site. Thr20 provides a ligand contact to Mg(2+). 3 residues coordinate substrate: Asp38, Arg62, and Gly83. Arg120 provides a ligand contact to ATP. Arg139 lines the substrate pocket. Arg156 contributes to the ATP binding site.

This sequence belongs to the shikimate kinase family. As to quaternary structure, monomer. Requires Mg(2+) as cofactor.

The protein localises to the cytoplasm. The enzyme catalyses shikimate + ATP = 3-phosphoshikimate + ADP + H(+). It functions in the pathway metabolic intermediate biosynthesis; chorismate biosynthesis; chorismate from D-erythrose 4-phosphate and phosphoenolpyruvate: step 5/7. Catalyzes the specific phosphorylation of the 3-hydroxyl group of shikimic acid using ATP as a cosubstrate. In Corynebacterium diphtheriae (strain ATCC 700971 / NCTC 13129 / Biotype gravis), this protein is Shikimate kinase.